The primary structure comprises 108 residues: Movement protein (108 aa).

The segment at 1–25 (MDASSQYSALPYPQPPRVPSAAPSA) is disordered. Residues 35–55 (EIVIFTFVSVLALYLLWLWVL) traverse the membrane as a helical segment. The disordered stretch occupies residues 73–108 (LIFGPGERPPVASADGSRPVPDPSPPVRRDLDLSRV). Positions 99 to 108 (VRRDLDLSRV) are enriched in basic and acidic residues.

It belongs to the mastrevirus movement protein family. As to quaternary structure, interacts with the capsid protein (CP). Part of a MP-CP-viral DNA complex.

Its subcellular location is the host membrane. Functionally, involved in the viral transport within, and between cells. The chain is Movement protein from Megathyrsus maximus (PanSV).